The primary structure comprises 468 residues: Secreted triacylglycerol lipase LIP7 (468 aa).

A signal peptide spans 1–21; the sequence is MFPRQILVFAALGLCFALVAG. The cysteines at positions 125 and 295 are disulfide-linked. Residue serine 209 is the Nucleophile of the active site. Catalysis depends on residues aspartate 355 and histidine 389.

The protein belongs to the AB hydrolase superfamily. Lipase family. Class Lip subfamily.

It localises to the secreted. Its subcellular location is the cell wall. It catalyses the reaction a triacylglycerol + H2O = a diacylglycerol + a fatty acid + H(+). It carries out the reaction a monoacylglycerol + H2O = glycerol + a fatty acid + H(+). The catalysed reaction is a diacylglycerol + H2O = a monoacylglycerol + a fatty acid + H(+). Its function is as follows. Secreted lipase involved in Dandruff and seborrheic dermatitis (D/SD) probably via lipase-mediated breakdown of sebaceous lipids and release of irritating free fatty acids. Has triacylglycerol lipase activity and is able to hydrolyze triolein. Mostly converts monoolein to di- and triolein, while free fatty acids are only produced in low amounts. The protein is Secreted triacylglycerol lipase LIP7 of Malassezia globosa (strain ATCC MYA-4612 / CBS 7966) (Dandruff-associated fungus).